The chain runs to 210 residues: ATP-dependent Clp protease proteolytic subunit (210 aa).

Serine 106 functions as the Nucleophile in the catalytic mechanism. Histidine 131 is a catalytic residue.

Belongs to the peptidase S14 family. In terms of assembly, fourteen ClpP subunits assemble into 2 heptameric rings which stack back to back to give a disk-like structure with a central cavity, resembling the structure of eukaryotic proteasomes.

The protein resides in the cytoplasm. It catalyses the reaction Hydrolysis of proteins to small peptides in the presence of ATP and magnesium. alpha-casein is the usual test substrate. In the absence of ATP, only oligopeptides shorter than five residues are hydrolyzed (such as succinyl-Leu-Tyr-|-NHMec, and Leu-Tyr-Leu-|-Tyr-Trp, in which cleavage of the -Tyr-|-Leu- and -Tyr-|-Trp bonds also occurs).. In terms of biological role, cleaves peptides in various proteins in a process that requires ATP hydrolysis. Has a chymotrypsin-like activity. Plays a major role in the degradation of misfolded proteins. In Afipia carboxidovorans (strain ATCC 49405 / DSM 1227 / KCTC 32145 / OM5) (Oligotropha carboxidovorans), this protein is ATP-dependent Clp protease proteolytic subunit.